The primary structure comprises 292 residues: MRIRVPATIANFGPGFDVFGVGIGEPYDELKFVESDEWEIEVEGYDVPTDGRNVAVVAARALATLVGEELYLRMKLRKEIRPRSGLGSSGASSLAGALAAARVLGIEDDGLIIKAALAGEEAASGSAHGDNVVPAYYGDFTIIESLNPLRVHRIPVDFPLVVVLPQIEVPTREARRILPERVPMGDAVRNVALAGALVKALTSGDVQTVGRLLEDRIALPYRLRLMPWFARVWKAALDAGAYGAFVSGSGPAIFALGEDLHAIGKAIAEAFLEIGVDAEVYITRAGVGAFWL.

81–91 lines the ATP pocket; the sequence is RPRSGLGSSGA.

This sequence belongs to the GHMP kinase family. Homoserine kinase subfamily.

It is found in the cytoplasm. The catalysed reaction is L-homoserine + ATP = O-phospho-L-homoserine + ADP + H(+). It functions in the pathway amino-acid biosynthesis; L-threonine biosynthesis; L-threonine from L-aspartate: step 4/5. In terms of biological role, catalyzes the ATP-dependent phosphorylation of L-homoserine to L-homoserine phosphate. This is Homoserine kinase from Thermococcus kodakarensis (strain ATCC BAA-918 / JCM 12380 / KOD1) (Pyrococcus kodakaraensis (strain KOD1)).